Here is a 364-residue protein sequence, read N- to C-terminus: tRNA-specific 2-thiouridylase MnmA 1 (364 aa).

Residues 11–18 (GMSGGTDS) and F37 each bind ATP. C96 functions as the Nucleophile in the catalytic mechanism. Residues C96 and C193 are joined by a disulfide bond. ATP is bound at residue G120. The tract at residues 142 to 144 (KDQ) is interaction with tRNA. C193 acts as the Cysteine persulfide intermediate in catalysis. Residues 309-310 (RY) are interaction with tRNA.

The protein belongs to the MnmA/TRMU family.

Its subcellular location is the cytoplasm. The enzyme catalyses S-sulfanyl-L-cysteinyl-[protein] + uridine(34) in tRNA + AH2 + ATP = 2-thiouridine(34) in tRNA + L-cysteinyl-[protein] + A + AMP + diphosphate + H(+). Its function is as follows. Catalyzes the 2-thiolation of uridine at the wobble position (U34) of tRNA, leading to the formation of s(2)U34. This chain is tRNA-specific 2-thiouridylase MnmA 1, found in Bacteroides fragilis (strain ATCC 25285 / DSM 2151 / CCUG 4856 / JCM 11019 / LMG 10263 / NCTC 9343 / Onslow / VPI 2553 / EN-2).